The chain runs to 494 residues: MGSTSSLYAAIDLGSNSFHMLVVREVAGSIQTLTRIKRKVRLAAGLNSENALSNEAMERGWQCLRLFAERLQDIPPSQIRVVATATLRLAVNAGDFIAKAQEILGCPVQVISGEEEARLIYQGVAHTTGGADQRLVVDIGGASTELVTGTGAQTTSLFSLSMGCVTWLERYFADRNLGQENFDAAEKAAREVLRPVADELRYHGWKVCVGASGTVQALQEIMMAQGMDERITLEKLQQLKQRAIHCGRLEELEIDGLTLERALVFPSGLAILIAIFTELNIQCMTLAGGALREGLVYGMLHLAVEQDIRSRTLRNIQRRFMIDIDQAQRVAKVAANFFDQVENEWYLEAISRDLLISACQLHEIGLSVDFKQAPQHAAYLVRNLDLPGFTPAQKKLLATLLLNQTNPVDLSSLHQQNAVPPRVAEQLCRLLRLAIIFASRRRDDLVPEMTLQANHELLTLTLPQGWLTQHPLGKEIIAQESQWQSYVHWPLEVH.

The protein belongs to the GppA/Ppx family. GppA subfamily.

The enzyme catalyses guanosine 3'-diphosphate 5'-triphosphate + H2O = guanosine 3',5'-bis(diphosphate) + phosphate + H(+). It participates in purine metabolism; ppGpp biosynthesis; ppGpp from GTP: step 2/2. Catalyzes the conversion of pppGpp to ppGpp. Guanosine pentaphosphate (pppGpp) is a cytoplasmic signaling molecule which together with ppGpp controls the 'stringent response', an adaptive process that allows bacteria to respond to amino acid starvation, resulting in the coordinated regulation of numerous cellular activities. In Escherichia coli (strain 55989 / EAEC), this protein is Guanosine-5'-triphosphate,3'-diphosphate pyrophosphatase.